The following is a 256-amino-acid chain: GCN5-related N-acetyltransferase 10, chloroplastic (256 aa).

The transit peptide at 1-41 (MGHLPQSLYSAAGPKFPYPGSSGLGVDQRKLTWSRFPVFLR) directs the protein to the chloroplast. One can recognise an N-acetyltransferase domain in the interval 106-256 (FMFFQAEVLS…RRVLMSKRFS (151 aa)). Residues 178 to 180 (LAV), 186 to 191 (RKKMAS), 217 to 219 (DAA), and Y224 contribute to the acetyl-CoA site. Residue Y224 is the Proton donor of the active site.

Belongs to the acetyltransferase family. GNAT subfamily. In terms of assembly, oligomer. In terms of processing, autoacetylated. Expressed in green tissues.

The protein resides in the plastid. It is found in the chloroplast. It carries out the reaction an N-terminal L-alpha-aminoacyl-[protein] + acetyl-CoA = N-terminal N(alpha)-acetyl-L-alpha-aminoacyl-[protein] + CoA + H(+). It catalyses the reaction L-lysyl-[protein] + acetyl-CoA = N(6)-acetyl-L-lysyl-[protein] + CoA + H(+). The catalysed reaction is N-terminal L-methionyl-[protein] + acetyl-CoA = N-terminal N(alpha)-acetyl-L-methionyl-[protein] + CoA + H(+). The enzyme catalyses N-terminal L-seryl-[protein] + acetyl-CoA = N-terminal N(alpha)-acetyl-L-seryl-[protein] + CoA + H(+). It carries out the reaction N-terminal L-valyl-[protein] + acetyl-CoA = N-terminal N(alpha)-acetyl-L-valyl-[protein] + CoA + H(+). It catalyses the reaction N-terminal L-threonyl-[protein] + acetyl-CoA = N-terminal N(alpha)-acetyl-L-threonyl-[protein] + CoA + H(+). The catalysed reaction is N-terminal L-alanyl-[protein] + acetyl-CoA = N-terminal N(alpha)-acetyl-L-alanyl-[protein] + CoA + H(+). The enzyme catalyses N-terminal glycyl-[protein] + acetyl-CoA = N-terminal N(alpha)-acetylglycyl-[protein] + CoA + H(+). Protein acetyltransferase with dual specificity triggering both N-alpha-acetylation (NTA), with a preference for leucine, methionine, serine, valine and to a lower extent threonine and alanine as substrates (can also use glycine), and epsilon-lysine acetylation (KA) of several plastid proteins. The chain is GCN5-related N-acetyltransferase 10, chloroplastic from Arabidopsis thaliana (Mouse-ear cress).